A 708-amino-acid polypeptide reads, in one-letter code: Serine/threonine-protein kinase Nek5 (708 aa).

Residues 4-259 form the Protein kinase domain; the sequence is YDVIKAIGQG…INSILKRPFL (256 aa). Residues 10–18 and Lys33 contribute to the ATP site; that span reads IGQGAFGKA. Residue Asp128 is the Proton acceptor of the active site. 2 disordered regions span residues 376-403 and 423-454; these read SYHP…PSQW and KQLG…FQEL. Positions 440–454 are enriched in basic and acidic residues; sequence QELRSNGEEPRFQEL.

This sequence belongs to the protein kinase superfamily. NEK Ser/Thr protein kinase family. NIMA subfamily. The cofactor is Mg(2+).

It localises to the cell projection. The protein localises to the cilium. The protein resides in the flagellum. It catalyses the reaction L-seryl-[protein] + ATP = O-phospho-L-seryl-[protein] + ADP + H(+). The enzyme catalyses L-threonyl-[protein] + ATP = O-phospho-L-threonyl-[protein] + ADP + H(+). The protein is Serine/threonine-protein kinase Nek5 (NEK5) of Homo sapiens (Human).